A 215-amino-acid polypeptide reads, in one-letter code: Cytochrome b6 (215 aa).

The chain crosses the membrane as a helical span at residues Ile32–Phe52. Cys35 lines the heme c pocket. Positions 86 and 100 each coordinate heme b. Helical transmembrane passes span Ala90–Phe110, Leu116–Tyr136, and Ala186–Ile206. Heme b is bound by residues His187 and His202.

This sequence belongs to the cytochrome b family. PetB subfamily. As to quaternary structure, the 4 large subunits of the cytochrome b6-f complex are cytochrome b6, subunit IV (17 kDa polypeptide, PetD), cytochrome f and the Rieske protein, while the 4 small subunits are PetG, PetL, PetM and PetN. The complex functions as a dimer. Heme b serves as cofactor. Heme c is required as a cofactor.

The protein localises to the plastid. It localises to the chloroplast thylakoid membrane. Its function is as follows. Component of the cytochrome b6-f complex, which mediates electron transfer between photosystem II (PSII) and photosystem I (PSI), cyclic electron flow around PSI, and state transitions. The chain is Cytochrome b6 from Skeletonema costatum (Marine centric diatom).